The following is a 605-amino-acid chain: Granule-bound starch synthase 1, chloroplastic/amyloplastic (605 aa).

Residues 1–72 (MAALATSQLV…GGRFPSLVVC (72 aa)) constitute a chloroplast transit peptide. ADP-alpha-D-glucose is bound at residue Lys91.

It belongs to the glycosyltransferase 1 family. Bacterial/plant glycogen synthase subfamily.

The protein resides in the plastid. Its subcellular location is the chloroplast. The protein localises to the amyloplast. The catalysed reaction is an NDP-alpha-D-glucose + [(1-&gt;4)-alpha-D-glucosyl](n) = [(1-&gt;4)-alpha-D-glucosyl](n+1) + a ribonucleoside 5'-diphosphate + H(+). The protein operates within glycan biosynthesis; starch biosynthesis. Its function is as follows. Required for the synthesis of amylose in endosperm. The chain is Granule-bound starch synthase 1, chloroplastic/amyloplastic (WAXY) from Zea mays (Maize).